The chain runs to 580 residues: MDFEDDYVHSTCRGAYQDFNGMDRDYGPGSYGGLDRDYGHGSYGGQRSMDSYLNQSYGMDNHSGGGGGSRFGPYESYDSRSSLGGRDLYRSGYGFNEPEQTRFGGSYGGRFESSYRNSLDSFGGRNQGGSSWEAPYSRSKLRPGFMEDRGRENYSSYSSFSSPHMKPAPVGSRGRGTPAYPESTFGSRSYDAFGGPSTGRGRGRGHMGDFGSFHRPGIIVDYQNKPANVTIATARGIKRKMMQIFIKPGGAFIKKPKLAKPMDKMNLSKSPTKTDPKNEEEEKRRIEARREKQRRRREKNSEKYGDGYRMAFTCSFCKFRTFEEKDIELHLESSSHQETLDHIQKQTKFDKVVMEFLHECMVNKFKKASIRKQQTLNHPEAYKIIEKDIMEGVTADDHMMKVETVHCSACSVYIPALHSSVQLHLKSPDHSKGKQAYKEQIKRESVLTATSILNNPIVKARYERFVKGENPFEIQDHPQDQQIEGDEEDEEKIDEPIEEEEEEEEEEEEEGEEAGSVEEEGDVEGEEGTAEAAAAGEADAVGEAEGAGEAEEAEEEEEEEGTQEFAAQACATEQCEHRQM.

Positions 1–124 (MDFEDDYVHS…YRNSLDSFGG (124 aa)) are mediates transcriptional activation. Ser-48, Ser-56, Ser-63, Ser-69, Ser-81, Ser-82, Ser-91, Ser-106, Ser-114, Ser-118, Ser-121, and Ser-137 each carry phosphoserine. A Glycyl lysine isopeptide (Lys-Gly) (interchain with G-Cter in SUMO2) cross-link involves residue Lys-140. A disordered region spans residues 156–196 (SYSSFSSPHMKPAPVGSRGRGTPAYPESTFGSRSYDAFGGP). Arg-173 is modified (omega-N-methylarginine). Position 212 is a phosphoserine (Ser-212). Arg-235 is subject to Omega-N-methylarginine. The Bipartite nuclear localization signal motif lies at 238 to 260 (KRKMMQIFIKPGGAFIKKPKLAK). Residue Lys-240 forms a Glycyl lysine isopeptide (Lys-Gly) (interchain with G-Cter in SUMO2) linkage. The residue at position 247 (Lys-247) is an N6-acetyllysine; alternate. Lys-247 participates in a covalent cross-link: Glycyl lysine isopeptide (Lys-Gly) (interchain with G-Cter in SUMO2); alternate. Glycyl lysine isopeptide (Lys-Gly) (interchain with G-Cter in SUMO2) cross-links involve residues Lys-254 and Lys-264. A disordered region spans residues 256-302 (PKLAKPMDKMNLSKSPTKTDPKNEEEEKRRIEARREKQRRRREKNSE). Phosphoserine is present on Ser-270. Positions 272–290 (TKTDPKNEEEEKRRIEARR) are enriched in basic and acidic residues. The segment at 314–336 (CSFCKFRTFEEKDIELHLESSSH) adopts a C2H2 AKAP95-type 1 zinc-finger fold. Residue Lys-401 forms a Glycyl lysine isopeptide (Lys-Gly) (interchain with G-Cter in SUMO2) linkage. Residues 407–430 (CSACSVYIPALHSSVQLHLKSPDH) form a C2H2 AKAP95-type 2 zinc finger. Residues Lys-459 and Lys-467 each participate in a glycyl lysine isopeptide (Lys-Gly) (interchain with G-Cter in SUMO2) cross-link. The interval 470–580 (NPFEIQDHPQ…ATEQCEHRQM (111 aa)) is disordered. Acidic residues predominate over residues 483 to 529 (IEGDEEDEEKIDEPIEEEEEEEEEEEEEGEEAGSVEEEGDVEGEEGT). The span at 530–539 (AEAAAAGEAD) shows a compositional bias: low complexity. Positions 540–562 (AVGEAEGAGEAEEAEEEEEEEGT) are enriched in acidic residues.

It belongs to the AKAP95 family. Component of the DBIRD complex. Interacts with CCAR2; the interaction is direct. In terms of tissue distribution, ubiquitously expressed in adult tissues. Highly expressed in neuronal tissues such as brain and neural tube.

It localises to the nucleus matrix. Core component of the DBIRD complex, a multiprotein complex that acts at the interface between core mRNP particles and RNA polymerase II (RNAPII) and integrates transcript elongation with the regulation of alternative splicing: the DBIRD complex affects local transcript elongation rates and alternative splicing of a large set of exons embedded in (A + T)-rich DNA regions. May also play a role in neuronal differentiation. Able to bind DNA and activate expression in vitro. This Mus musculus (Mouse) protein is DBIRD complex subunit ZNF326 (Znf326).